A 1343-amino-acid polypeptide reads, in one-letter code: Xanthine dehydrogenase (1343 aa).

The 2Fe-2S ferredoxin-type domain occupies 8 to 95 (SELVFFVNGK…GCAVTTVEGI (88 aa)). Positions 47, 52, 55, 77, 117, 120, 152, and 154 each coordinate [2Fe-2S] cluster. The FAD-binding PCMH-type domain maps to 235–424 (FSSERVTWYR…LGIHFQKTTP (190 aa)). FAD contacts are provided by residues 263 to 270 (LVVGNTEV), Phe-343, 353 to 357 (CLGGN), Asp-366, Leu-414, and Lys-432. Mo-molybdopterin is bound by residues Gln-780 and Phe-811. Substrate is bound by residues Glu-815 and Arg-893. Arg-925 is a binding site for Mo-molybdopterin. Residue Phe-927 coordinates substrate. Ala-1092 contacts Mo-molybdopterin. Glu-1275 functions as the Proton acceptor in the catalytic mechanism.

It belongs to the xanthine dehydrogenase family. As to quaternary structure, homodimer. It depends on FAD as a cofactor. The cofactor is Mo-molybdopterin. [2Fe-2S] cluster serves as cofactor.

It is found in the peroxisome. The enzyme catalyses xanthine + NAD(+) + H2O = urate + NADH + H(+). It carries out the reaction hypoxanthine + NAD(+) + H2O = xanthine + NADH + H(+). Its function is as follows. Key enzyme in purine degradation. Catalyzes the oxidation of hypoxanthine to xanthine. Catalyzes the oxidation of xanthine to uric acid. The chain is Xanthine dehydrogenase (ry) from Drosophila pseudoobscura pseudoobscura (Fruit fly).